Consider the following 345-residue polypeptide: S-adenosylmethionine:tRNA ribosyltransferase-isomerase (345 aa).

The protein belongs to the QueA family. Monomer.

It is found in the cytoplasm. It catalyses the reaction 7-aminomethyl-7-carbaguanosine(34) in tRNA + S-adenosyl-L-methionine = epoxyqueuosine(34) in tRNA + adenine + L-methionine + 2 H(+). It functions in the pathway tRNA modification; tRNA-queuosine biosynthesis. Its function is as follows. Transfers and isomerizes the ribose moiety from AdoMet to the 7-aminomethyl group of 7-deazaguanine (preQ1-tRNA) to give epoxyqueuosine (oQ-tRNA). The sequence is that of S-adenosylmethionine:tRNA ribosyltransferase-isomerase from Shewanella halifaxensis (strain HAW-EB4).